A 324-amino-acid chain; its full sequence is Ribose-phosphate pyrophosphokinase (324 aa).

Residues 45–47 and 104–105 contribute to the ATP site; these read NGE and RQ. Positions 138 and 178 each coordinate Mg(2+). Residue lysine 201 is part of the active site. Residues arginine 203, aspartate 229, and 233–237 each bind D-ribose 5-phosphate; that span reads DTGGT.

The protein belongs to the ribose-phosphate pyrophosphokinase family. Class I subfamily. As to quaternary structure, homohexamer. It depends on Mg(2+) as a cofactor.

Its subcellular location is the cytoplasm. The catalysed reaction is D-ribose 5-phosphate + ATP = 5-phospho-alpha-D-ribose 1-diphosphate + AMP + H(+). The protein operates within metabolic intermediate biosynthesis; 5-phospho-alpha-D-ribose 1-diphosphate biosynthesis; 5-phospho-alpha-D-ribose 1-diphosphate from D-ribose 5-phosphate (route I): step 1/1. Functionally, involved in the biosynthesis of the central metabolite phospho-alpha-D-ribosyl-1-pyrophosphate (PRPP) via the transfer of pyrophosphoryl group from ATP to 1-hydroxyl of ribose-5-phosphate (Rib-5-P). The chain is Ribose-phosphate pyrophosphokinase from Streptomyces avermitilis (strain ATCC 31267 / DSM 46492 / JCM 5070 / NBRC 14893 / NCIMB 12804 / NRRL 8165 / MA-4680).